A 400-amino-acid chain; its full sequence is NADH-quinone oxidoreductase subunit D (400 aa).

This sequence belongs to the complex I 49 kDa subunit family. In terms of assembly, NDH-1 is composed of 14 different subunits. Subunits NuoB, C, D, E, F, and G constitute the peripheral sector of the complex.

The protein resides in the cell inner membrane. It catalyses the reaction a quinone + NADH + 5 H(+)(in) = a quinol + NAD(+) + 4 H(+)(out). NDH-1 shuttles electrons from NADH, via FMN and iron-sulfur (Fe-S) centers, to quinones in the respiratory chain. The immediate electron acceptor for the enzyme in this species is believed to be a menaquinone. Couples the redox reaction to proton translocation (for every two electrons transferred, four hydrogen ions are translocated across the cytoplasmic membrane), and thus conserves the redox energy in a proton gradient. This is NADH-quinone oxidoreductase subunit D from Chlorobium chlorochromatii (strain CaD3).